A 961-amino-acid polypeptide reads, in one-letter code: Probable inorganic carbon transporter subunit DabA (961 aa).

Residues C406, D408, H653, and C668 each coordinate Zn(2+).

The protein belongs to the inorganic carbon transporter (TC 9.A.2) DabA family. As to quaternary structure, forms a complex with DabB. Zn(2+) is required as a cofactor.

Its subcellular location is the cell inner membrane. In terms of biological role, part of an energy-coupled inorganic carbon pump. This is Probable inorganic carbon transporter subunit DabA from Hydrogenobaculum sp. (strain Y04AAS1).